Here is a 95-residue protein sequence, read N- to C-terminus: Large ribosomal subunit protein bL27 (95 aa).

The propeptide occupies 1–6; sequence MILQLF.

This sequence belongs to the bacterial ribosomal protein bL27 family. Post-translationally, the N-terminus is cleaved by ribosomal processing cysteine protease Prp.

The protein is Large ribosomal subunit protein bL27 of Caldanaerobacter subterraneus subsp. tengcongensis (strain DSM 15242 / JCM 11007 / NBRC 100824 / MB4) (Thermoanaerobacter tengcongensis).